The following is a 264-amino-acid chain: S-adenosylmethionine decarboxylase proenzyme (264 aa).

Ser-112 serves as the catalytic Schiff-base intermediate with substrate; via pyruvic acid. Ser-112 carries the pyruvic acid (Ser); by autocatalysis modification. Catalysis depends on His-117, which acts as the Proton acceptor; for processing activity. The active-site Proton donor; for catalytic activity is the Cys-140.

The protein belongs to the prokaryotic AdoMetDC family. Type 2 subfamily. As to quaternary structure, heterooctamer of four alpha and four beta chains arranged as a tetramer of alpha/beta heterodimers. Requires pyruvate as cofactor. In terms of processing, is synthesized initially as an inactive proenzyme. Formation of the active enzyme involves a self-maturation process in which the active site pyruvoyl group is generated from an internal serine residue via an autocatalytic post-translational modification. Two non-identical subunits are generated from the proenzyme in this reaction, and the pyruvate is formed at the N-terminus of the alpha chain, which is derived from the carboxyl end of the proenzyme. The post-translation cleavage follows an unusual pathway, termed non-hydrolytic serinolysis, in which the side chain hydroxyl group of the serine supplies its oxygen atom to form the C-terminus of the beta chain, while the remainder of the serine residue undergoes an oxidative deamination to produce ammonia and the pyruvoyl group blocking the N-terminus of the alpha chain.

It catalyses the reaction S-adenosyl-L-methionine + H(+) = S-adenosyl 3-(methylsulfanyl)propylamine + CO2. Its pathway is amine and polyamine biosynthesis; S-adenosylmethioninamine biosynthesis; S-adenosylmethioninamine from S-adenosyl-L-methionine: step 1/1. Its function is as follows. Catalyzes the decarboxylation of S-adenosylmethionine to S-adenosylmethioninamine (dcAdoMet), the propylamine donor required for the synthesis of the polyamines spermine and spermidine from the diamine putrescine. This is S-adenosylmethionine decarboxylase proenzyme from Klebsiella pneumoniae (strain 342).